The sequence spans 247 residues: Small ribosomal subunit protein uS2 (247 aa).

It belongs to the universal ribosomal protein uS2 family.

In Cupriavidus pinatubonensis (strain JMP 134 / LMG 1197) (Cupriavidus necator (strain JMP 134)), this protein is Small ribosomal subunit protein uS2.